Consider the following 372-residue polypeptide: Carbamoyl phosphate synthase small chain (372 aa).

The segment at 1–186 (MTYCKRGTEG…IHQNNSPDII (186 aa)) is CPSase. L-glutamine contacts are provided by S52, G233, and G235. The region spanning 185–372 (IIVLVDCGIK…KKMVIKDEGN (188 aa)) is the Glutamine amidotransferase type-1 domain. Residue C261 is the Nucleophile of the active site. L262, Q265, N303, G305, and Y306 together coordinate L-glutamine. Residues H345 and E347 contribute to the active site.

The protein belongs to the CarA family. Composed of two chains; the small (or glutamine) chain promotes the hydrolysis of glutamine to ammonia, which is used by the large (or ammonia) chain to synthesize carbamoyl phosphate. Tetramer of heterodimers (alpha,beta)4.

It catalyses the reaction hydrogencarbonate + L-glutamine + 2 ATP + H2O = carbamoyl phosphate + L-glutamate + 2 ADP + phosphate + 2 H(+). It carries out the reaction L-glutamine + H2O = L-glutamate + NH4(+). It functions in the pathway amino-acid biosynthesis; L-arginine biosynthesis; carbamoyl phosphate from bicarbonate: step 1/1. The protein operates within pyrimidine metabolism; UMP biosynthesis via de novo pathway; (S)-dihydroorotate from bicarbonate: step 1/3. Its function is as follows. Small subunit of the glutamine-dependent carbamoyl phosphate synthetase (CPSase). CPSase catalyzes the formation of carbamoyl phosphate from the ammonia moiety of glutamine, carbonate, and phosphate donated by ATP, constituting the first step of 2 biosynthetic pathways, one leading to arginine and/or urea and the other to pyrimidine nucleotides. The small subunit (glutamine amidotransferase) binds and cleaves glutamine to supply the large subunit with the substrate ammonia. In Metallosphaera sedula (strain ATCC 51363 / DSM 5348 / JCM 9185 / NBRC 15509 / TH2), this protein is Carbamoyl phosphate synthase small chain.